The sequence spans 218 residues: Cytidylate kinase (218 aa).

Gly11–Thr19 contributes to the ATP binding site.

The protein belongs to the cytidylate kinase family. Type 1 subfamily.

It localises to the cytoplasm. It catalyses the reaction CMP + ATP = CDP + ADP. The enzyme catalyses dCMP + ATP = dCDP + ADP. In Mycoplasmopsis synoviae (strain 53) (Mycoplasma synoviae), this protein is Cytidylate kinase.